The sequence spans 1095 residues: Putative disease resistance protein At4g11170 (1095 aa).

Residues 9–173 form the TIR domain; sequence WRYDVFPSFR…TISKDVLEKL (165 aa). E84 is an active-site residue. An NB-ARC domain is found at 168–454; that stretch reads DVLEKLNATP…HENYLKQMII (287 aa). 6 LRR repeats span residues 609–631, 632–654, 655–677, 679–701, 702–722, and 723–744; these read CLVELNMSHSKLKKLWSGVQPLR, NLRTMNLNSSRNLEILPNLMEAT, KLNRLDLGWCESLVELPSSIKNL, HLILLEMSCCKKLEIIPTNINLP, SLEVLHFRYCTRLQTFPEIST, and NIRLLNLIGTAITEVPPSVKYW.

The catalysed reaction is NAD(+) + H2O = ADP-D-ribose + nicotinamide + H(+). The sequence is that of Putative disease resistance protein At4g11170 from Arabidopsis thaliana (Mouse-ear cress).